A 129-amino-acid chain; its full sequence is Small ribosomal subunit protein uS9 (129 aa).

The protein belongs to the universal ribosomal protein uS9 family.

The chain is Small ribosomal subunit protein uS9 from Helicobacter acinonychis (strain Sheeba).